The primary structure comprises 432 residues: MRVVYLVLVVAVIIAITEAKSVKKSKTRSPKHPRHRTLADDYKLNRISAKYCKDYDDSCKAFGKIAKKDKKSCFNNPDKARMACPVSCKLCDKKTFHKKSKLSDVVVVRAMCVDIEVDQCNPDVCYTNPDWATENCRKTCMLCKPDIRGPCDTDPRCPFWGQYGYCSTATYIDNHCPYNCDVYSYVPEAPQPYPLPIEPLYAYQPLPYPTAPPGVTPATLPPYYENAPQPTYAPGAQYPAATAAPAPSAPGATAAPAPSAPGATAAPAPSAPEATAAPAPSAPEATAAPAPSAPEATAAPAPAPEAAPSEPEAAPAPAPEMAPAPAPEMAPAPEAASAPAPEAAPAPEAASAPAPEAAPAPEAASAPAPEAASAPAPEAAPAPEAASAPAPEAAPAPEAAPSEQPMPGKKSKSKPSKRKGVKKSKSGHKRHH.

The signal sequence occupies residues 1–19 (MRVVYLVLVVAVIIAITEA). 6 disulfide bridges follow: cysteine 52/cysteine 91, cysteine 59/cysteine 84, cysteine 73/cysteine 88, cysteine 125/cysteine 140, cysteine 157/cysteine 176, and cysteine 166/cysteine 180. ShKT domains follow at residues 59–91 (CKAF…CKLC), 107–143 (VVRA…CMLC), and 149–183 (GPCD…CDVY). Residues 235–313 (GAQYPAATAA…PEAAPSEPEA (79 aa)) are compositionally biased toward low complexity. Residues 235–432 (GAQYPAATAA…KSKSGHKRHH (198 aa)) form a disordered region. A compositionally biased stretch (pro residues) spans 314-330 (APAPAPEMAPAPAPEMA). Positions 331–408 (PAPEAASAPA…AAPSEQPMPG (78 aa)) are enriched in low complexity. Positions 409-432 (KKSKSKPSKRKGVKKSKSGHKRHH) are enriched in basic residues.

This sequence belongs to the NEP3 family. In terms of tissue distribution, nematocytes. In late planulae, transcripts are found throughout the ectoderm in nematocytes, with high concentration of expressing cells in the oral pole. In primary polyps, is expressed in nematocytes in the body wall and physa ectoderm and in the upper and lower pharynx.

The protein resides in the nematocyst. It localises to the secreted. Its function is as follows. Probable toxin. The chain is Nematocyst expressed protein 3-like from Nematostella vectensis (Starlet sea anemone).